The chain runs to 288 residues: Ribosomal RNA small subunit methyltransferase A (288 aa).

Positions 28, 30, 55, 77, 103, and 123 each coordinate S-adenosyl-L-methionine.

It belongs to the class I-like SAM-binding methyltransferase superfamily. rRNA adenine N(6)-methyltransferase family. RsmA subfamily.

The protein resides in the cytoplasm. The enzyme catalyses adenosine(1518)/adenosine(1519) in 16S rRNA + 4 S-adenosyl-L-methionine = N(6)-dimethyladenosine(1518)/N(6)-dimethyladenosine(1519) in 16S rRNA + 4 S-adenosyl-L-homocysteine + 4 H(+). Functionally, specifically dimethylates two adjacent adenosines (A1518 and A1519) in the loop of a conserved hairpin near the 3'-end of 16S rRNA in the 30S particle. May play a critical role in biogenesis of 30S subunits. The polypeptide is Ribosomal RNA small subunit methyltransferase A (Xanthobacter autotrophicus (strain ATCC BAA-1158 / Py2)).